Reading from the N-terminus, the 25-residue chain is Small ribosomal subunit protein eS32 (25 aa).

Residues Met1 to Lys25 are disordered.

The protein belongs to the eukaryotic ribosomal protein eS32 family. In terms of assembly, component of the small ribosomal subunit.

This is Small ribosomal subunit protein eS32 (RPL41) from Eremothecium gossypii (strain ATCC 10895 / CBS 109.51 / FGSC 9923 / NRRL Y-1056) (Yeast).